The sequence spans 276 residues: Rho-related protein racO (276 aa).

Residue 11–18 (GDGLIGKT) coordinates GTP. An Effector region motif is present at residues 34-42 (YSSFDSEYL). Residues 60-64 (ENDGF) and 124-127 (IKTD) each bind GTP. Positions 199–276 (FKNNNNNNNY…NKTTNKCKIS (78 aa)) are disordered. The span at 200-270 (KNNNNNNNYN…SYKNHNNKTT (71 aa)) shows a compositional bias: low complexity. Cysteine methyl ester is present on cysteine 273. A lipid anchor (S-geranylgeranyl cysteine) is attached at cysteine 273. Residues 274–276 (KIS) constitute a propeptide, removed in mature form.

This sequence belongs to the small GTPase superfamily. Rho family.

It localises to the cell membrane. The chain is Rho-related protein racO (racO) from Dictyostelium discoideum (Social amoeba).